A 281-amino-acid chain; its full sequence is Predicted GPI-anchored protein 39 (281 aa).

A signal peptide spans 1-18 (MKATTFTLLLSIATAINA). Disordered regions lie at residues 52–94 (HHHG…SASV) and 106–227 (VSVS…SSSE). 4 stretches are compositionally biased toward low complexity: residues 69–94 (SSSS…SASV), 106–158 (VSVS…STTD), 167–203 (ATDS…IEET), and 210–227 (SVPS…SSSE). Asn150 carries an N-linked (GlcNAc...) asparagine glycan. Asn239, Asn246, Asn249, and Asn252 each carry an N-linked (GlcNAc...) asparagine glycan. A lipid anchor (GPI-anchor amidated serine) is attached at Ser256. The propeptide at 257 to 281 (ANFAIQYGTDYGVAVVAAIVGALLI) is removed in mature form.

It localises to the cell membrane. The polypeptide is Predicted GPI-anchored protein 39 (PGA39) (Candida albicans (strain SC5314 / ATCC MYA-2876) (Yeast)).